Consider the following 555-residue polypeptide: CTL-like protein DDB_G0274487 (555 aa).

Positions 1–17 (MGIEDNSQQPNTGSPYG) are enriched in polar residues. Residues 1 to 101 (MGIEDNSQQP…NLNKANDRES (101 aa)) form a disordered region. Low complexity predominate over residues 19-63 (SPPSQYNPYGQQPPQQQQYNPYGEQQQQPQQQQQYGYQPQFQPTY). A compositionally biased stretch (pro residues) spans 79 to 90 (PFPPQQQQPPPI). N-linked (GlcNAc...) asparagine glycosylation occurs at Asn116. Residues 138 to 158 (IWFSILFGLNFGLLIVVSASA) form a helical membrane-spanning segment. Asn174 carries N-linked (GlcNAc...) asparagine glycosylation. The next 10 helical transmembrane spans lie at 182 to 202 (FLFA…WAWL), 210 to 230 (ESLI…YCVF), 231 to 251 (FFVW…FFII), 284 to 304 (AGYV…SAFA), 313 to 333 (AIQT…FHVI), 340 to 360 (TVSG…VGMP), 372 to 392 (LTTS…IETL), 405 to 425 (VVVK…SSIV), 472 to 492 (IAIG…LISI), and 493 to 513 (PFDM…LVII).

This sequence belongs to the CTL (choline transporter-like) family.

Its subcellular location is the membrane. The chain is CTL-like protein DDB_G0274487 from Dictyostelium discoideum (Social amoeba).